The primary structure comprises 405 residues: Probable glucan 1,3-beta-glucosidase A (405 aa).

The first 26 residues, 1–26, serve as a signal peptide directing secretion; sequence MFPRISQAAILAHSLLAVCTSAATLA. Residue glutamate 198 is the Proton donor of the active site. Disulfide bonds link cysteine 278–cysteine 403 and cysteine 304–cysteine 330. Glutamate 296 serves as the catalytic Nucleophile.

Belongs to the glycosyl hydrolase 5 (cellulase A) family. As to quaternary structure, monomer. Mn(2+) is required as a cofactor.

The protein resides in the secreted. It catalyses the reaction Successive hydrolysis of beta-D-glucose units from the non-reducing ends of (1-&gt;3)-beta-D-glucans, releasing alpha-glucose.. Beta-glucanases participate in the metabolism of beta-glucan, the main structural component of the cell wall. It could also function biosynthetically as a transglycosylase. The protein is Probable glucan 1,3-beta-glucosidase A (exgA) of Emericella nidulans (strain FGSC A4 / ATCC 38163 / CBS 112.46 / NRRL 194 / M139) (Aspergillus nidulans).